Consider the following 227-residue polypeptide: Ribonuclease HII (227 aa).

The RNase H type-2 domain occupies 1 to 210 (MKLAGIDEAG…LKKIEEKLAK (210 aa)). Residues Asp7, Glu8, and Asp105 each contribute to the a divalent metal cation site.

This sequence belongs to the RNase HII family. Mn(2+) serves as cofactor. It depends on Mg(2+) as a cofactor.

It is found in the cytoplasm. It catalyses the reaction Endonucleolytic cleavage to 5'-phosphomonoester.. Endonuclease that specifically degrades the RNA of RNA-DNA hybrids. The polypeptide is Ribonuclease HII (Thermococcus onnurineus (strain NA1)).